Here is a 773-residue protein sequence, read N- to C-terminus: Mitochondrial 15S rRNA processing factor CCM1 (773 aa).

A mitochondrion-targeting transit peptide spans 1 to 23; the sequence is MLRARLLVPLVRPALVHRLDRCY. The segment covering 89–106 has biased composition (basic and acidic residues); it reads AAEATEQHKELPPAEQER. Residues 89 to 122 form a disordered region; it reads AAEATEQHKELPPAEQERPSGANTHTAPIKHDTK. PPR repeat units lie at residues 220–254, 255–285, 294–328, 331–365, and 366–400; these read SAIT…NITP, TVHT…LKLA, NQVI…SLET, TAHT…SVAN, and VRTY…HSES.

This sequence belongs to the CCM1 family. In terms of assembly, binds to mitochondrial small subunit 15S rRNA.

The protein resides in the mitochondrion. In terms of biological role, regulates mitochondrial small subunit maturation by controlling 15S rRNA 5'-end processing. Localizes to the 5' precursor of the 15S rRNA in a position that is subsequently occupied by mS47 in the mature yeast mtSSU. Uses structure and sequence-specific RNA recognition, binding to a single-stranded region of the precursor and specifically recognizing bases -6 to -1. The exchange of Ccm1 for mS47 is coupled to the irreversible removal of precursor rRNA that is accompanied by conformational changes of the mitoribosomal proteins uS5m and mS26. These conformational changes signal completion of 5'-end rRNA processing through protection of the mature 5'-end of the 15S rRNA and stabilization of mS47. The removal of the 5' precursor together with the dissociation of Ccm1 may be catalyzed by the 5'-3' exoribonuclease Pet127. Involved in the specific removal of group I introns in mitochondrial encoded transcripts. This Yarrowia lipolytica (strain CLIB 122 / E 150) (Yeast) protein is Mitochondrial 15S rRNA processing factor CCM1 (CCM1).